A 646-amino-acid polypeptide reads, in one-letter code: Phosphomethylpyrimidine synthase (646 aa).

Substrate contacts are provided by residues asparagine 235, methionine 264, tyrosine 293, histidine 329, 349–351 (SRG), 390–393 (DGLR), and glutamate 429. Zn(2+) is bound at residue histidine 433. Residue tyrosine 456 participates in substrate binding. Histidine 497 is a Zn(2+) binding site. Cysteine 577, cysteine 580, and cysteine 585 together coordinate [4Fe-4S] cluster.

It belongs to the ThiC family. As to quaternary structure, homodimer. [4Fe-4S] cluster is required as a cofactor.

It catalyses the reaction 5-amino-1-(5-phospho-beta-D-ribosyl)imidazole + S-adenosyl-L-methionine = 4-amino-2-methyl-5-(phosphooxymethyl)pyrimidine + CO + 5'-deoxyadenosine + formate + L-methionine + 3 H(+). Its pathway is cofactor biosynthesis; thiamine diphosphate biosynthesis. Catalyzes the synthesis of the hydroxymethylpyrimidine phosphate (HMP-P) moiety of thiamine from aminoimidazole ribotide (AIR) in a radical S-adenosyl-L-methionine (SAM)-dependent reaction. This chain is Phosphomethylpyrimidine synthase, found in Vibrio campbellii (strain ATCC BAA-1116).